A 235-amino-acid polypeptide reads, in one-letter code: 7-cyano-7-deazaguanine synthase (235 aa).

7-17 (CSGGLDSVSLA) serves as a coordination point for ATP. 4 residues coordinate Zn(2+): Cys185, Cys193, Cys196, and Cys199.

This sequence belongs to the QueC family. The cofactor is Zn(2+).

The enzyme catalyses 7-carboxy-7-deazaguanine + NH4(+) + ATP = 7-cyano-7-deazaguanine + ADP + phosphate + H2O + H(+). The protein operates within purine metabolism; 7-cyano-7-deazaguanine biosynthesis. In terms of biological role, catalyzes the ATP-dependent conversion of 7-carboxy-7-deazaguanine (CDG) to 7-cyano-7-deazaguanine (preQ(0)). This is 7-cyano-7-deazaguanine synthase from Allorhizobium ampelinum (strain ATCC BAA-846 / DSM 112012 / S4) (Agrobacterium vitis (strain S4)).